Here is a 310-residue protein sequence, read N- to C-terminus: Ribosomal protein uL3 glutamine methyltransferase (310 aa).

This sequence belongs to the protein N5-glutamine methyltransferase family. PrmB subfamily.

It catalyses the reaction L-glutaminyl-[ribosomal protein uL3] + S-adenosyl-L-methionine = N(5)-methyl-L-glutaminyl-[ribosomal protein uL3] + S-adenosyl-L-homocysteine + H(+). Functionally, methylates large ribosomal subunit protein uL3 on a specific glutamine residue. In Yersinia pestis, this protein is Ribosomal protein uL3 glutamine methyltransferase.